The following is a 523-amino-acid chain: Sucrose 6(F)-phosphate phosphorylase (523 aa).

Sucrose 6(F)-phosphate is bound by residues aspartate 58, histidine 96, 221-223 (RLD), glutamate 264, 326-327 (HD), and lysine 434. The active-site Nucleophile is aspartate 223. The active-site Proton donor/acceptor is the glutamate 264.

The protein belongs to the glycosyl hydrolase 13 family. Sucrose phosphorylase subfamily. As to quaternary structure, monomer.

The catalysed reaction is sucrose 6(F)-phosphate + phosphate = beta-D-fructose 6-phosphate + alpha-D-glucose 1-phosphate. In terms of biological role, catalyzes the reversible phosphorolysis of sucrose 6(F)-phosphate into alpha-D-glucose 1-phosphate (Glc1P) and D-fructose 6-phosphate. May be involved in a new pathway for the degradation of sucrose, which could become phosphorylated on its fructose moiety during uptake via a PTS system. Shows strict specificity since it does not catalyze reactions with alternative substrates. The sequence is that of Sucrose 6(F)-phosphate phosphorylase from Ilumatobacter coccineus (strain NBRC 103263 / KCTC 29153 / YM16-304).